A 1780-amino-acid polypeptide reads, in one-letter code: Protein TIC 214 (1780 aa).

Transmembrane regions (helical) follow at residues 19–39, 68–88, 91–111, 133–153, 176–196, and 227–247; these read IINSVVVVGLYYGFLTTFSIG, FIAGQLMMFISIYYAPLHLAL, PHTITVLALPYLLFHFFWNNN, VFLNNLIFQLFNHFILPSSML, VGWLIGHILFMKWVGLVLVWI, and IFSILLFITCVYYLGRTPSPI. The tract at residues 251-275 is disordered; the sequence is KLKGTSETEERGGTKQDQEVSTEEA. Basic and acidic residues predominate over residues 254–268; sequence GTSETEERGGTKQDQ.

Belongs to the TIC214 family. Part of the Tic complex.

The protein localises to the plastid. The protein resides in the chloroplast inner membrane. Involved in protein precursor import into chloroplasts. May be part of an intermediate translocation complex acting as a protein-conducting channel at the inner envelope. The protein is Protein TIC 214 of Draba nemorosa (Woodland whitlowgrass).